Here is a 177-residue protein sequence, read N- to C-terminus: Putative zinc finger protein 826 (177 aa).

The C2H2-type 1; degenerate zinc-finger motif lies at 99–114; the sequence is KTFTWSSSPHKHRRTH. The segment at 120 to 142 adopts a C2H2-type 2; degenerate zinc-finger fold; it reads YKCEECGKAFTASSTLSEYKTIH. The segment at 148–170 adopts a C2H2-type 3 zinc-finger fold; sequence CKCEECGKAFNWSSDFNKHKRIH.

It localises to the nucleus. Its function is as follows. May be involved in transcriptional regulation. In Homo sapiens (Human), this protein is Putative zinc finger protein 826 (ZNF826P).